A 576-amino-acid polypeptide reads, in one-letter code: Enolase 4 (576 aa).

Residues 187–232 (ELRNEAMSEAPPQATPTSAPAKDKKGNDKGKKGNITENPLPPAEPP) form a disordered region. Residues 196–206 (APPQATPTSAP) are compositionally biased toward low complexity. Basic and acidic residues predominate over residues 207–217 (AKDKKGNDKGK). Glutamate 302 and lysine 524 together coordinate substrate.

This sequence belongs to the enolase family.

The enzyme catalyses (2R)-2-phosphoglycerate = phosphoenolpyruvate + H2O. Its pathway is carbohydrate degradation; glycolysis; pyruvate from D-glyceraldehyde 3-phosphate: step 4/5. The polypeptide is Enolase 4 (eno4) (Danio rerio (Zebrafish)).